The following is a 629-amino-acid chain: tRNA uridine 5-carboxymethylaminomethyl modification enzyme MnmG (629 aa).

13 to 18 (GGGHAG) contributes to the FAD binding site. Residue 273 to 287 (GPRYCPSIEDKVVRF) participates in NAD(+) binding.

It belongs to the MnmG family. In terms of assembly, homodimer. Heterotetramer of two MnmE and two MnmG subunits. Requires FAD as cofactor.

It is found in the cytoplasm. In terms of biological role, NAD-binding protein involved in the addition of a carboxymethylaminomethyl (cmnm) group at the wobble position (U34) of certain tRNAs, forming tRNA-cmnm(5)s(2)U34. This Nitrosococcus oceani (strain ATCC 19707 / BCRC 17464 / JCM 30415 / NCIMB 11848 / C-107) protein is tRNA uridine 5-carboxymethylaminomethyl modification enzyme MnmG.